A 306-amino-acid chain; its full sequence is [methyl-Co(III) glycine betaine-specific corrinoid protein]--tetrahydrofolate methyltransferase (306 aa).

This sequence belongs to the MtrH family.

The enzyme catalyses methyl-Co(III)-[glycine betaine-specific corrinoid protein] + (6S)-5,6,7,8-tetrahydrofolate = Co(I)-[glycine betaine-specific corrinoid protein] + (6S)-5-methyl-5,6,7,8-tetrahydrofolate + H(+). Functionally, methyltransferase able to catalyze the transfer of a methyl group from methylcobalamin (methylCbl) to tetrahydrofolate (THF) in vitro, to generate methyl-THF and cob(I)alamin. In vivo, the methyl group probably comes from the adjacently encoded methylated corrinoid protein DSY3155. The methyl group may then be ultimately converted to carbon dioxide, and its oxidation would also provide reducing equivalents for anaerobic respiration. Thus, may function in the pathway that allows anaerobic methylotrophic growth of D.hafniense using glycine betaine. This Desulfitobacterium hafniense (strain Y51) protein is [methyl-Co(III) glycine betaine-specific corrinoid protein]--tetrahydrofolate methyltransferase.